Here is a 320-residue protein sequence, read N- to C-terminus: Cytochrome f (320 aa).

An N-terminal signal peptide occupies residues 1 to 35; that stretch reads MENRKTFSWLKEQMIRSISVSIMIYVITRTSISNA. Heme is bound by residues Tyr36, Cys56, Cys59, and His60. The helical transmembrane segment at 286-305 threads the bilayer; the sequence is VQGLLFFFASVILAQVFLVL.

This sequence belongs to the cytochrome f family. As to quaternary structure, the 4 large subunits of the cytochrome b6-f complex are cytochrome b6, subunit IV (17 kDa polypeptide, petD), cytochrome f and the Rieske protein, while the 4 small subunits are PetG, PetL, PetM and PetN. The complex functions as a dimer. Heme serves as cofactor.

The protein resides in the plastid. It localises to the chloroplast thylakoid membrane. Functionally, component of the cytochrome b6-f complex, which mediates electron transfer between photosystem II (PSII) and photosystem I (PSI), cyclic electron flow around PSI, and state transitions. This chain is Cytochrome f (petA), found in Zea mays (Maize).